Reading from the N-terminus, the 403-residue chain is Tyrosine--tRNA ligase (403 aa).

The 'HIGH' region signature appears at 43 to 52 (PTAPDLHLGH). Positions 227–231 (KMSKS) match the 'KMSKS' region motif. Lys230 contacts ATP. Residues 338 to 399 (LPIAQLLKQT…GKRKFARVTI (62 aa)) form the S4 RNA-binding domain.

It belongs to the class-I aminoacyl-tRNA synthetase family. TyrS type 2 subfamily. Homodimer.

Its subcellular location is the cytoplasm. The enzyme catalyses tRNA(Tyr) + L-tyrosine + ATP = L-tyrosyl-tRNA(Tyr) + AMP + diphosphate + H(+). Catalyzes the attachment of tyrosine to tRNA(Tyr) in a two-step reaction: tyrosine is first activated by ATP to form Tyr-AMP and then transferred to the acceptor end of tRNA(Tyr). This chain is Tyrosine--tRNA ligase, found in Nitrosospira multiformis (strain ATCC 25196 / NCIMB 11849 / C 71).